A 724-amino-acid chain; its full sequence is Methionine--tRNA ligase (724 aa).

The short motif at 12–22 is the 'HIGH' region element; the sequence is PYVNNIPHLGN. Positions 143, 146, 155, and 158 each coordinate Zn(2+). Residues 330–334 carry the 'KMSKS' region motif; the sequence is KFSKS. Residue K333 coordinates ATP. The tRNA-binding domain occupies 560 to 665; sequence FREKVLLRVV…KNPIAGERII (106 aa).

Belongs to the class-I aminoacyl-tRNA synthetase family. MetG type 1 subfamily. Homodimer. It depends on Zn(2+) as a cofactor.

The protein localises to the cytoplasm. The catalysed reaction is tRNA(Met) + L-methionine + ATP = L-methionyl-tRNA(Met) + AMP + diphosphate. Its function is as follows. Is required not only for elongation of protein synthesis but also for the initiation of all mRNA translation through initiator tRNA(fMet) aminoacylation. This is Methionine--tRNA ligase from Borreliella afzelii (strain PKo) (Borrelia afzelii).